Reading from the N-terminus, the 338-residue chain is Ketol-acid reductoisomerase (NADP(+)) (338 aa).

One can recognise a KARI N-terminal Rossmann domain in the interval 1 to 181 (MKVFYDNDAD…GGTRAGVIET (181 aa)). NADP(+) contacts are provided by residues 24-27 (YGSQ), Arg-47, Ser-50, Ser-52, and 82-85 (DEGQ). Residue His-107 is part of the active site. Gly-133 contributes to the NADP(+) binding site. In terms of domain architecture, KARI C-terminal knotted spans 182 to 327 (SFREETETDL…SKLRSMMTWI (146 aa)). Positions 190, 194, 226, and 230 each coordinate Mg(2+). Residue Ser-251 participates in substrate binding.

Belongs to the ketol-acid reductoisomerase family. Mg(2+) is required as a cofactor.

The enzyme catalyses (2R)-2,3-dihydroxy-3-methylbutanoate + NADP(+) = (2S)-2-acetolactate + NADPH + H(+). It carries out the reaction (2R,3R)-2,3-dihydroxy-3-methylpentanoate + NADP(+) = (S)-2-ethyl-2-hydroxy-3-oxobutanoate + NADPH + H(+). It participates in amino-acid biosynthesis; L-isoleucine biosynthesis; L-isoleucine from 2-oxobutanoate: step 2/4. It functions in the pathway amino-acid biosynthesis; L-valine biosynthesis; L-valine from pyruvate: step 2/4. In terms of biological role, involved in the biosynthesis of branched-chain amino acids (BCAA). Catalyzes an alkyl-migration followed by a ketol-acid reduction of (S)-2-acetolactate (S2AL) to yield (R)-2,3-dihydroxy-isovalerate. In the isomerase reaction, S2AL is rearranged via a Mg-dependent methyl migration to produce 3-hydroxy-3-methyl-2-ketobutyrate (HMKB). In the reductase reaction, this 2-ketoacid undergoes a metal-dependent reduction by NADPH to yield (R)-2,3-dihydroxy-isovalerate. The chain is Ketol-acid reductoisomerase (NADP(+)) from Acidithiobacillus ferrooxidans (strain ATCC 23270 / DSM 14882 / CIP 104768 / NCIMB 8455) (Ferrobacillus ferrooxidans (strain ATCC 23270)).